The primary structure comprises 356 residues: tRNA pseudouridine synthase D (356 aa).

D84 (nucleophile) is an active-site residue. A TRUD domain is found at 159 to 302 (GVPNYYGPQR…RRGARRPIRV (144 aa)).

The protein belongs to the pseudouridine synthase TruD family.

The catalysed reaction is uridine(13) in tRNA = pseudouridine(13) in tRNA. Functionally, responsible for synthesis of pseudouridine from uracil-13 in transfer RNAs. The sequence is that of tRNA pseudouridine synthase D from Thermus thermophilus (strain ATCC 27634 / DSM 579 / HB8).